The chain runs to 30 residues: Basic phospholipase A2 CM-I (30 aa).

This sequence belongs to the phospholipase A2 family. Group I subfamily. Ca(2+) serves as cofactor. Expressed by the venom gland.

It localises to the secreted. It carries out the reaction a 1,2-diacyl-sn-glycero-3-phosphocholine + H2O = a 1-acyl-sn-glycero-3-phosphocholine + a fatty acid + H(+). Its function is as follows. Snake venom phospholipase A2 (PLA2) that shows weak anticoagulant activity. Is more catalytically active than the strong anticoagulant protein CM-IV found in this venom. Acts by inhibiting the complex composed of tissue factor (F3) and coagulation factor VIIa (F7) (TF-VIIa complex) by only enzymatic mechanism. PLA2 catalyzes the calcium-dependent hydrolysis of the 2-acyl groups in 3-sn-phosphoglycerides. This is Basic phospholipase A2 CM-I from Naja nigricollis (Black-necked spitting cobra).